Reading from the N-terminus, the 905-residue chain is Stonin-2 (905 aa).

Disordered stretches follow at residues 1 to 121 (MTTL…HQET), 178 to 205 (EQTS…VEME), and 244 to 263 (LPPV…SVIP). The span at 40-50 (SSSPDQSESSS) shows a compositional bias: low complexity. Residues 60–73 (SQDHSHSEQDDSSE) are compositionally biased toward basic and acidic residues. The segment covering 85-94 (PGSPEQPPPD) has biased composition (pro residues). The span at 178-196 (EQTSGQASGADSTDNSSSL) shows a compositional bias: polar residues. Residues 244–256 (LPPVTSPLKPNTP) are compositionally biased toward pro residues. Threonine 255 is subject to Phosphothreonine. Phosphoserine occurs at positions 281, 287, and 302. Short sequence motifs (NPF) lie at residues 313-315 (NPF) and 329-331 (NPF). The region spanning 427-560 (GWPMMLRIPE…DLPVLSMDLS (134 aa)) is the SHD domain. Residues 568-878 (EEEITVDVRD…SYQVALGSIW (311 aa)) form the MHD domain. Serine 762 is modified (phosphoserine).

Belongs to the Stoned B family. In terms of assembly, interacts with the second C2 domain of synaptotagmins SYT1 and SYT2. Interacts with EPS15, EPS15R and ITSN1. Interacts indirectly with the AP-2 adapter complex. Interacts with TOR1A and COPS4; the interaction controls STON2 protein stability. Phosphorylated in vitro by PKD. Post-translationally, neddylated; deneddylated via its interaction with the COP9 signalosome (CSN) complex through TOR1A and COPS4. In terms of processing, ubiquitinated; leading to its degradation. In terms of tissue distribution, ubiquitous.

The protein resides in the cytoplasm. It is found in the membrane. Its subcellular location is the synapse. The protein localises to the synaptosome. Its function is as follows. Adapter protein involved in endocytic machinery. Involved in the synaptic vesicle recycling. May facilitate clathrin-coated vesicle uncoating. In Homo sapiens (Human), this protein is Stonin-2 (STON2).